The following is a 649-amino-acid chain: MFEIKARDAMGRLGVITINGKKIETPTIMPVIHPNPKKQTVSMDLINKMADVVITNSYITYTTPELREIAETKGIHELIDFKNVVVTDSGSFQLSVYGDVNVGPMEIIDFQEKIGVDVGTILDIPTGPDVSREKAESDLLETFKRAEDSIKRRKEMGYKLALNGTIQGSKYLDLRQKSADVMGKMDFDIYPIGAVVPLMEDYRYREVAEVILNSKMHLPTNKPVHLFGCGHPMLFALSVALGCDLFDSAAYALYAKNGRYLTADGTLHLEDMKDLKNFPCTCKVCSEYTPKQLFNLEEKEKTRLLAEHNLYVTFEEIDRIKNAIKEGNLWELVEERCRSHPKLLNGLRVISKYMDFIEKHDPVSKKSGFFYTGYESMNRPEIYRHKQRLERIQYDKIYVTTVSENTSKPYHENLDNVPCDVDVLIKDSVFGLVPLNIDTMYPLAQNEVPDLYDFEKKYNNEFVSNFMEKNSEKILDISTYNYYINHYGTKKECDKINPDVFRVGKMLEYQYGAKILDDELMEKVKTRRSKNTGRIRNLLLEKEVLFTLRANDNFLIPAKSGAELLHEKLEFPKYRIVIDSSVEEYARAGKSVYSKFVKDCDPELRPFEEVLIVNSDDELLAYGTTILNGLELMEFDYGVAATLRGGLKK.

D88 functions as the Nucleophile in the catalytic mechanism. Positions 123 and 194 each coordinate substrate. Zn(2+) is bound by residues C280, C282, and C285. The PUA domain occupies 573-648 (KYRIVIDSSV…VAATLRGGLK (76 aa)).

The protein belongs to the archaeosine tRNA-ribosyltransferase family. Zn(2+) serves as cofactor.

It catalyses the reaction guanosine(15) in tRNA + 7-cyano-7-deazaguanine = 7-cyano-7-carbaguanosine(15) in tRNA + guanine. The protein operates within tRNA modification; archaeosine-tRNA biosynthesis. Its function is as follows. Exchanges the guanine residue with 7-cyano-7-deazaguanine (preQ0) at position 15 in the dihydrouridine loop (D-loop) of archaeal tRNAs. This chain is tRNA-guanine(15) transglycosylase, found in Methanococcus maripaludis (strain C6 / ATCC BAA-1332).